Here is a 161-residue protein sequence, read N- to C-terminus: Phosphopantetheine adenylyltransferase (161 aa).

Ser11 serves as a coordination point for substrate. ATP-binding positions include Ser11 to Phe12 and His19. Positions 43, 75, and 89 each coordinate substrate. ATP-binding positions include Gly90–Arg92, Glu100, and Tyr125–Ser131.

It belongs to the bacterial CoaD family. In terms of assembly, homohexamer. The cofactor is Mg(2+).

It localises to the cytoplasm. The catalysed reaction is (R)-4'-phosphopantetheine + ATP + H(+) = 3'-dephospho-CoA + diphosphate. It functions in the pathway cofactor biosynthesis; coenzyme A biosynthesis; CoA from (R)-pantothenate: step 4/5. Reversibly transfers an adenylyl group from ATP to 4'-phosphopantetheine, yielding dephospho-CoA (dPCoA) and pyrophosphate. The polypeptide is Phosphopantetheine adenylyltransferase (Staphylococcus epidermidis (strain ATCC 35984 / DSM 28319 / BCRC 17069 / CCUG 31568 / BM 3577 / RP62A)).